An 82-amino-acid polypeptide reads, in one-letter code: Conotoxin Gla-TxX (82 aa).

The first 25 residues, 1 to 25 (MSGHTSVSFLLLSIVALGMVATVIC), serve as a signal peptide directing secretion. 5 positions are modified to 4-carboxyglutamate: glutamate 30, glutamate 34, glutamate 37, glutamate 40, and glutamate 41. Residue asparagine 72 is modified to Asparagine amide. A propeptide spanning residues 77 to 82 (LIHMQK) is cleaved from the precursor.

In terms of processing, contains 4 disulfide bonds. In terms of tissue distribution, expressed by the venom duct.

It is found in the secreted. This Conus textile (Cloth-of-gold cone) protein is Conotoxin Gla-TxX.